The primary structure comprises 179 residues: TM2 domain-containing protein Y66D12A.21 (179 aa).

A signal peptide spans 1–18 (MRQLLLTLSLISVSASDA). Topologically, residues 19–82 (TVKCDDLDPN…IFNRTVPSAC (64 aa)) are extracellular. A glycan (N-linked (GlcNAc...) asparagine) is linked at N75. The chain crosses the membrane as a helical span at residues 83-105 (HYGAHVSYTTTVLLSIFLGFFGI). The TM2 domain maps to 88–135 (VSYTTTVLLSIFLGFFGIDRIYLGYYALGLIKMFSLGGLFVFWLVDII). The Cytoplasmic portion of the chain corresponds to 106 to 109 (DRIY). Residues 110–132 (LGYYALGLIKMFSLGGLFVFWLV) traverse the membrane as a helical segment. At 133-179 (DIILISLQLLGPADGTAYAMAYYGPKAQMIRFDSHTNFSFYTCDGCL) the chain is on the extracellular side. N-linked (GlcNAc...) asparagine glycosylation is present at N169.

It belongs to the TM2 family.

The protein resides in the membrane. This Caenorhabditis elegans protein is TM2 domain-containing protein Y66D12A.21.